Here is a 352-residue protein sequence, read N- to C-terminus: C-glycoside deglycosidase alpha subunit (352 aa).

Glutamate 147 is a binding site for Mn(2+). Catalysis depends on histidine 149, which acts as the Proton acceptor. 3 residues coordinate Mn(2+): aspartate 179, histidine 269, and glutamate 305.

It belongs to the C-glycoside deglycosidase alpha subunit family. Heterodimer composed of an alpha subunit (CarB2) and a beta subunit (CarC2). The cofactor is a divalent metal cation.

It catalyses the reaction 3''-dehydroorientin = 1,5-anhydro-D-erythro-hex-1-en-3-ulose + luteolin. With respect to regulation, activity is strongly reduced in the presence of chelating agents. Carbon-carbon bond-cleaving enzyme which participates in the metabolism of C-glycosides. Acts on the C8-glycosylated compound 3''-dehydroorientin (3''-oxo-orientin). This Arthrobacter globiformis (strain ATCC 8010 / DSM 20124 / JCM 1332 / NBRC 12137 / NCIMB 8907 / NRRL B-2979 / 168) protein is C-glycoside deglycosidase alpha subunit.